Consider the following 147-residue polypeptide: Epididymal secretory protein E3-beta (147 aa).

Residues 1–25 (MASSLKIWGTLLALLCILCTLLVQS) form the signal peptide.

In terms of tissue distribution, epididymis.

The protein localises to the secreted. Possible function in sperm maturation. This is Epididymal secretory protein E3-beta (EDDM3B) from Homo sapiens (Human).